Consider the following 365-residue polypeptide: TD and POZ domain-containing protein 1 (365 aa).

Residues 19–149 (KFCYKWTISN…EDQLTICCKV (131 aa)) enclose the MATH domain. One can recognise a BTB domain in the interval 188 to 250 (TDCCLLVAGH…EMMGFIYTGK (63 aa)).

Belongs to the Tdpoz family.

The protein is TD and POZ domain-containing protein 1 of Mus musculus (Mouse).